The chain runs to 208 residues: Probable GTP-binding protein EngB (208 aa).

The region spanning 18-187 is the EngB-type G domain; sequence KQFEICVIGR…FALMKKVVIQ (170 aa). GTP is bound by residues 26–33, 52–56, 69–72, 135–138, and 166–168; these read GRSNVGKS, GRTQL, DLPG, NKLD, and VSA. Positions 33 and 54 each coordinate Mg(2+).

Belongs to the TRAFAC class TrmE-Era-EngA-EngB-Septin-like GTPase superfamily. EngB GTPase family. Mg(2+) serves as cofactor.

Functionally, necessary for normal cell division and for the maintenance of normal septation. This is Probable GTP-binding protein EngB from Ureaplasma parvum serovar 3 (strain ATCC 27815 / 27 / NCTC 11736).